Here is a 305-residue protein sequence, read N- to C-terminus: Small ribosomal subunit protein uS3 (305 aa).

In terms of domain architecture, KH type-2 spans 17 to 86; the sequence is IDEFFSEELS…DPQVDVQEVD (70 aa). Composition is skewed to acidic residues over residues 207 to 262 and 272 to 305; these read EPEG…EAET and AAEEPDEALDEDVEAEAEELLDEMEDETTDEEET. The tract at residues 207–305 is disordered; that stretch reads EPEGDVEELL…EDETTDEEET (99 aa).

This sequence belongs to the universal ribosomal protein uS3 family. Part of the 30S ribosomal subunit.

Functionally, binds the lower part of the 30S subunit head. The sequence is that of Small ribosomal subunit protein uS3 from Natronomonas pharaonis (strain ATCC 35678 / DSM 2160 / CIP 103997 / JCM 8858 / NBRC 14720 / NCIMB 2260 / Gabara) (Halobacterium pharaonis).